The sequence spans 568 residues: Vitamin H transporter 1 (568 aa).

12 consecutive transmembrane segments (helical) span residues 85-105 (IIPC…TVSL), 123-143 (GYSA…YIIF), 158-178 (IWVS…AVLG), 187-207 (YVAL…GLAY), 222-242 (IGWY…VSAG), 257-277 (WMFL…PWWL), 345-365 (VWPF…IFNY), 384-404 (LLNA…MPLY), 411-431 (FSFF…ANYA), 439-459 (GGLL…MAWC), 470-490 (VGVA…SVVT), and 508-528 (NDVC…EFLL). Residues 547-568 (VEDEQEMTDIKPALPSSQQADA) form a disordered region.

Belongs to the major facilitator superfamily. Allantoate permease family.

It is found in the membrane. Functionally, involved in uptake of biotin and desthiobiotin with the concomitant entry of protons. This is Vitamin H transporter 1 (vht1) from Schizosaccharomyces pombe (strain 972 / ATCC 24843) (Fission yeast).